The sequence spans 568 residues: Protein disconnected (568 aa).

The segment at 16–77 (GHGPHSHQHV…PRRWGSPPIN (62 aa)) is disordered. The span at 19–29 (PHSHQHVHSHL) shows a compositional bias: basic residues. Positions 30 to 45 (PSHPQPNAASPASSPG) are enriched in low complexity. Over residues 46-62 (GSSGSGSGSAAGSGTGS) the composition is skewed to gly residues. 2 C2H2-type zinc fingers span residues 92-115 (VQCSICFKTFCDKGALKIHFSAVH) and 120-145 (HKCTVEGCNMVFSSRRSRNRHSANPN). Disordered regions lie at residues 134–157 (RRSRNRHSANPNPKLHSPHIRRKI), 220–364 (LLST…SDAF), 391–419 (SSASSSSASASANPPQTSIKMDLDPDSDS), and 501–568 (QQYN…PISV). A compositionally biased stretch (acidic residues) spans 235–246 (NEQDADPEDDND). Positions 253–263 (QANSSSPAASS) are enriched in polar residues. Residues 282 to 292 (SLSLASSSSIA) show a composition bias toward low complexity. A compositionally biased stretch (basic and acidic residues) spans 313–360 (SEQDREQEQEQEQEREREAEKEQEQDVESDKEHEPEQEHELEREKRSP). The span at 391-402 (SSASSSSASASA) shows a compositional bias: low complexity. The span at 520–550 (HLTLSHHHQEQHHHLGHHHMGHHHHHHHQHH) shows a compositional bias: basic residues. The span at 558–568 (SPAATNAPISV) shows a compositional bias: polar residues.

Expressed at low levels in the adult head and very low, but detectable, levels in the body.

It localises to the nucleus. Its function is as follows. Required for the establishment of stable connections between the larval optic nerves, the Bolwig's nerves, and their target cells in the brain during embryonic development. This Drosophila melanogaster (Fruit fly) protein is Protein disconnected (disco).